Consider the following 309-residue polypeptide: Methionyl-tRNA formyltransferase (309 aa).

109–112 contributes to the (6S)-5,6,7,8-tetrahydrofolate binding site; that stretch reads SLLP.

It belongs to the Fmt family.

The catalysed reaction is L-methionyl-tRNA(fMet) + (6R)-10-formyltetrahydrofolate = N-formyl-L-methionyl-tRNA(fMet) + (6S)-5,6,7,8-tetrahydrofolate + H(+). Attaches a formyl group to the free amino group of methionyl-tRNA(fMet). The formyl group appears to play a dual role in the initiator identity of N-formylmethionyl-tRNA by promoting its recognition by IF2 and preventing the misappropriation of this tRNA by the elongation apparatus. This chain is Methionyl-tRNA formyltransferase, found in Thiobacillus denitrificans (strain ATCC 25259 / T1).